We begin with the raw amino-acid sequence, 552 residues long: CTP synthase (552 aa).

The tract at residues 1–265 (MTKFVFVTGG…DRIVCEKLAL (265 aa)) is amidoligase domain. Position 13 (Ser-13) interacts with CTP. A UTP-binding site is contributed by Ser-13. Residues 14–19 (SLGKGI) and Asp-71 contribute to the ATP site. 2 residues coordinate Mg(2+): Asp-71 and Glu-139. Residues 146 to 148 (DIE), 186 to 191 (KTKPTQ), and Lys-222 contribute to the CTP site. UTP is bound by residues 186-191 (KTKPTQ) and Lys-222. Positions 290–545 (TIGMVGKYVD…IKAALAHKQA (256 aa)) constitute a Glutamine amidotransferase type-1 domain. Gly-351 provides a ligand contact to L-glutamine. The active-site Nucleophile; for glutamine hydrolysis is Cys-378. L-glutamine is bound by residues 379 to 382 (LGMQ), Glu-402, and Arg-468. Residues His-518 and Glu-520 contribute to the active site.

This sequence belongs to the CTP synthase family. As to quaternary structure, homotetramer.

It carries out the reaction UTP + L-glutamine + ATP + H2O = CTP + L-glutamate + ADP + phosphate + 2 H(+). The catalysed reaction is L-glutamine + H2O = L-glutamate + NH4(+). The enzyme catalyses UTP + NH4(+) + ATP = CTP + ADP + phosphate + 2 H(+). Its pathway is pyrimidine metabolism; CTP biosynthesis via de novo pathway; CTP from UDP: step 2/2. Allosterically activated by GTP, when glutamine is the substrate; GTP has no effect on the reaction when ammonia is the substrate. The allosteric effector GTP functions by stabilizing the protein conformation that binds the tetrahedral intermediate(s) formed during glutamine hydrolysis. Inhibited by the product CTP, via allosteric rather than competitive inhibition. Its function is as follows. Catalyzes the ATP-dependent amination of UTP to CTP with either L-glutamine or ammonia as the source of nitrogen. Regulates intracellular CTP levels through interactions with the four ribonucleotide triphosphates. In Herminiimonas arsenicoxydans, this protein is CTP synthase.